Here is a 1060-residue protein sequence, read N- to C-terminus: MPKRTDIKKIMVIGSGPIIIGQAAEFDYAGTQACLALKEEGYEVVLVNSNPATIMTDKEIADHVYIEPITLEFVSRILRKERPDALLPTLGGQTGLNMAMELSESGILDELNVELLGTKLSAIDQAEDRDLFKQLMEELEQPIPESEIVNTVEQAVAFAKRIGYPIIVRPAFTLGGTGGGMCDTEEELRQIAENGLKLSPVTQCLIEKSIAGFKEIEYEVMRDSADNAIVVCNMENFDPVGIHTGDSIVFAPSQTLSDYEYQMLRDASLKIIRALKIEGGCNVQLALDPHSFNYYVIEVNPRVSRSSALASKATGYPIAKLAAKIAVGLTLDEMKNPVTGTTYAEFEPALDYVVSKIPRWPFDKFEKGARELGTQMKATGEVMAIGRNIEESLLKAVRSLEIGAYHNELAELSHVSDLELTKKMVHAQDDRLFYLSEAIRRGYSIEELQSLTKIDLFFLDKLLHIIEIETALESHVDNVAVLKEAKQNGFSDRKIAALWGQTEQAIADFRRANQIVPVYKMVDTCAAEFESHTPYFYSTYEVENESNVSKKPSVLVLGSGPIRIGQGVEFDYATVHSVKAIQAAGYEAIIMNSNPETVSTDFSVSDKLYFEPLTLEDVMNVIDLENPIGVIVQFGGQTAINLAEPLTKQGVKILGTTIEDLDRAENRDLFEQALQELAIPQPPGDTATSAEEAVVIADRIGYPVLVRPSYVLGGRAMEIVENQKDLEDYMRHAVKASPEHPVLVDSYLLGQECEVDAICDGETVLIPGIMEHIERAGVHSGDSMAVYPPQYLSQEIQATIADYTKKLALGLNCVGMMNIQFVIHENRVYVIEVNPRASRTVPFLSKITGIPMAQVATKAILGEKLTDLGYQDGLYPESKQVHVKAPVFSFTKLQKVDTYLGPEMKSTGEVMGSDYYLEKALYKAFEASGLHLPSYGAVLFTIADETKEEALEIAKRFSAIGYSLVATEGTADFLAKHQLPVKKVTKISNPEGETVLDVIRNGNAQVVISTMDKNRSSANQDGFSIRREAVEHGIPLFTSLDTANAILKVLESRAFTTEAI.

The carboxyphosphate synthetic domain stretch occupies residues 1 to 401 (MPKRTDIKKI…SLLKAVRSLE (401 aa)). Residues Arg-129, Arg-169, Gly-175, Gly-176, Lys-208, Ile-210, Glu-215, Gly-241, Ile-242, His-243, Gln-284, and Glu-298 each coordinate ATP. The ATP-grasp 1 domain occupies 133–327 (KQLMEELEQP…IAKLAAKIAV (195 aa)). The Mg(2+) site is built by Gln-284, Glu-298, and Asn-300. Gln-284, Glu-298, and Asn-300 together coordinate Mn(2+). Residues 402 to 546 (IGAYHNELAE…YSTYEVENES (145 aa)) are oligomerization domain. The tract at residues 547-929 (NVSKKPSVLV…ALYKAFEASG (383 aa)) is carbamoyl phosphate synthetic domain. One can recognise an ATP-grasp 2 domain in the interval 671 to 861 (EQALQELAIP…MAQVATKAIL (191 aa)). ATP-binding residues include Arg-707, Ser-746, Leu-748, Glu-752, Gly-777, Val-778, His-779, Ser-780, Gln-820, and Glu-832. Mg(2+) contacts are provided by Gln-820, Glu-832, and Asn-834. Mn(2+)-binding residues include Gln-820, Glu-832, and Asn-834. In terms of domain architecture, MGS-like spans 930–1060 (LHLPSYGAVL…ESRAFTTEAI (131 aa)). Residues 930 to 1060 (LHLPSYGAVL…ESRAFTTEAI (131 aa)) are allosteric domain.

Belongs to the CarB family. Composed of two chains; the small (or glutamine) chain promotes the hydrolysis of glutamine to ammonia, which is used by the large (or ammonia) chain to synthesize carbamoyl phosphate. Tetramer of heterodimers (alpha,beta)4. It depends on Mg(2+) as a cofactor. Mn(2+) serves as cofactor.

The catalysed reaction is hydrogencarbonate + L-glutamine + 2 ATP + H2O = carbamoyl phosphate + L-glutamate + 2 ADP + phosphate + 2 H(+). It catalyses the reaction hydrogencarbonate + NH4(+) + 2 ATP = carbamoyl phosphate + 2 ADP + phosphate + 2 H(+). It functions in the pathway amino-acid biosynthesis; L-arginine biosynthesis; carbamoyl phosphate from bicarbonate: step 1/1. The protein operates within pyrimidine metabolism; UMP biosynthesis via de novo pathway; (S)-dihydroorotate from bicarbonate: step 1/3. Its function is as follows. Large subunit of the glutamine-dependent carbamoyl phosphate synthetase (CPSase). CPSase catalyzes the formation of carbamoyl phosphate from the ammonia moiety of glutamine, carbonate, and phosphate donated by ATP, constituting the first step of 2 biosynthetic pathways, one leading to arginine and/or urea and the other to pyrimidine nucleotides. The large subunit (synthetase) binds the substrates ammonia (free or transferred from glutamine from the small subunit), hydrogencarbonate and ATP and carries out an ATP-coupled ligase reaction, activating hydrogencarbonate by forming carboxy phosphate which reacts with ammonia to form carbamoyl phosphate. The chain is Carbamoyl phosphate synthase large chain from Enterococcus faecalis (strain ATCC 700802 / V583).